Reading from the N-terminus, the 338-residue chain is MSTLRLLISDSYDPWFNLAVEECIFRQMPATQRVLFLWRNADTVVIGRAQNPWKECNTRRMEEDNVRLARRSSGGGAVFHDLGNTCFTFMAGKPEYDKTISTSIVLNALNALGVSAEASGRNDLVVKTAEGDRKVSGSAYRETKDRGFHHGTLLLNADLSRLANYLNPDKKKLAAKGITSVRSRVTNLTELLPGITHEQVCEAITKAFFAHYGERVEAEIISPDKTPDLPNFAEIFARQSSWEWNFGQAPAFSHLLDERFSWGGVELHFDVEKGHITRAQVFTDSLNPAPLEALAGRLQGGLYRADMLQQECEALLVDFPDQEKELRELSTWIAGAVR.

Residues 29–216 (PATQRVLFLW…AFFAHYGERV (188 aa)) form the BPL/LPL catalytic domain. ATP is bound by residues arginine 71, 76–79 (GAVF), and lysine 134. (R)-lipoate is bound at residue lysine 134.

This sequence belongs to the LplA family. As to quaternary structure, monomer.

Its subcellular location is the cytoplasm. The catalysed reaction is L-lysyl-[lipoyl-carrier protein] + (R)-lipoate + ATP = N(6)-[(R)-lipoyl]-L-lysyl-[lipoyl-carrier protein] + AMP + diphosphate + H(+). It participates in protein modification; protein lipoylation via exogenous pathway; protein N(6)-(lipoyl)lysine from lipoate: step 1/2. Its pathway is protein modification; protein lipoylation via exogenous pathway; protein N(6)-(lipoyl)lysine from lipoate: step 2/2. Catalyzes both the ATP-dependent activation of exogenously supplied lipoate to lipoyl-AMP and the transfer of the activated lipoyl onto the lipoyl domains of lipoate-dependent enzymes. The polypeptide is Lipoate-protein ligase A (Escherichia coli O8 (strain IAI1)).